Consider the following 331-residue polypeptide: MAAAETGRRPHIPVLLRPLLAAVAPVSGVWLDGTFGAGGYARGLLEAGADRVIGVDRDPLALEMAQDWAGAYGDRLRLVAGTFSQLDVHAGEPLDGVVLDLGVSSMQLDQADRGFSFQKDGPLDMRMSQQGESAADLVNEASEETLADILYHYGEERASRRIARAIVEARAAGPITRTLHLAEIVARCLPRPKPGQMHPATRSFQAIRIAVNAEFSELVEGLEAAERALKPGGRLAVVTFHSLEDRIVKRFLQLRSGGEGQGNRYAPETRAEAARFTLPLRRAISPDEAELADNPRARSARLRVGVRTDAPAGPVDPQVLGMPLIPKKGRR.

S-adenosyl-L-methionine-binding positions include 38-40 (GGY), D56, F83, D100, and Q107. The interval 308-331 (TDAPAGPVDPQVLGMPLIPKKGRR) is disordered.

It belongs to the methyltransferase superfamily. RsmH family.

Its subcellular location is the cytoplasm. The catalysed reaction is cytidine(1402) in 16S rRNA + S-adenosyl-L-methionine = N(4)-methylcytidine(1402) in 16S rRNA + S-adenosyl-L-homocysteine + H(+). Specifically methylates the N4 position of cytidine in position 1402 (C1402) of 16S rRNA. This chain is Ribosomal RNA small subunit methyltransferase H, found in Cereibacter sphaeroides (strain ATCC 17025 / ATH 2.4.3) (Rhodobacter sphaeroides).